Consider the following 490-residue polypeptide: Cytochrome P450 2C50 (490 aa).

At serine 127 the chain carries Phosphoserine. N6-acetyllysine occurs at positions 249 and 375. Cysteine 435 lines the heme pocket.

It belongs to the cytochrome P450 family. It depends on heme as a cofactor. In terms of tissue distribution, expressed in heart and liver.

The protein localises to the endoplasmic reticulum membrane. Its subcellular location is the microsome membrane. It catalyses the reaction an organic molecule + reduced [NADPH--hemoprotein reductase] + O2 = an alcohol + oxidized [NADPH--hemoprotein reductase] + H2O + H(+). Metabolizes arachidonic acid to several midchain and omega-terminal hydroxyeicosatetraenoic acids (HETE). This is Cytochrome P450 2C50 from Mus musculus (Mouse).